Reading from the N-terminus, the 1194-residue chain is Phosphatidylinositol-3,5-bisphosphate 3-phosphatase MTMR3 (1194 aa).

The residue at position 4 (S4) is a Phosphoserine. Residues 151–572 enclose the Myotubularin phosphatase domain; the sequence is EHVTSRFKNE…RNLMLWSAVY (422 aa). Residues N322, N347, and I348 each contribute to the a 1,2-diacyl-sn-glycero-3-phospho-(1D-myo-inositol-3,5-bisphosphate) site. A 1,2-diacyl-sn-glycero-3-phospho-(1D-myo-inositol-3-phosphate) contacts are provided by N322, N347, and I348. Residue C409 is the Phosphocysteine intermediate of the active site. A 1,2-diacyl-sn-glycero-3-phospho-(1D-myo-inositol-3,5-bisphosphate) is bound by residues S410, D411, G412, W413, D414, R415, K451, and R455. Residues S410, D411, G412, W413, D414, and R415 each contribute to the a 1,2-diacyl-sn-glycero-3-phospho-(1D-myo-inositol-3-phosphate) site. R455 is an a 1,2-diacyl-sn-glycero-3-phospho-(1D-myo-inositol-3-phosphate) binding site. Residues 583–609 form a disordered region; it reads DDSCAPYPAPGTSPDEPPLSRLPKTRS. Over residues 589 to 599 the composition is skewed to pro residues; the sequence is YPAPGTSPDEP. 4 positions are modified to phosphoserine: S609, S629, S643, and S647. Positions 693-724 are enriched in basic and acidic residues; sequence TKEESGVEEPTHREHTEVPEVKEEAPLAKESR. 3 disordered regions span residues 693-731, 852-871, and 876-897; these read TKEESGVEEPTHREHTEVPEVKEEAPLAKESRTAAQGSG, ESGPQLHHRPCLASSGRFSG, and PIAPEPRSAERPQWDSVLHRTS. T725 carries the phosphothreonine modification. S904 carries the phosphoserine modification. 2 disordered regions span residues 932–971 and 988–1017; these read NKASEQPAGFDTLQKYPTPNGHCANGETGRSKDSLSHQLS and KWLNSHSGRPSTTNSPEQPSRSHLDDDGMP. Residues 991 to 1006 are compositionally biased toward polar residues; that stretch reads NSHSGRPSTTNSPEQP. A coiled-coil region spans residues 1025–1058; it reads QRLRQIESGHQQEVETLKKQVQELKSRLESQYLT. S1060 carries the phosphoserine modification. The segment at 1115–1175 adopts an FYVE-type zinc-finger fold; the sequence is DHLAAHCYAC…VCKSCYSSLH (61 aa). Positions 1121, 1124, 1137, 1140, 1145, 1148, 1167, and 1170 each coordinate Zn(2+).

The protein belongs to the protein-tyrosine phosphatase family. Non-receptor class myotubularin subfamily. In terms of assembly, forms heterodimers with MTMR4 that recruit both CEP55 and PLK1; occurs during early mitosis, regulates the phosphorylation of CEP55 by PLK1 and its recruitment to the midbody where it mediates cell abscission.

The protein resides in the cytoplasm. It is found in the cytosol. It localises to the membrane. The enzyme catalyses a 1,2-diacyl-sn-glycero-3-phospho-(1D-myo-inositol-3,5-bisphosphate) + H2O = a 1,2-diacyl-sn-glycero-3-phospho-(1D-myo-inositol-5-phosphate) + phosphate. The catalysed reaction is a 1,2-diacyl-sn-glycero-3-phospho-(1D-myo-inositol-3-phosphate) + H2O = a 1,2-diacyl-sn-glycero-3-phospho-(1D-myo-inositol) + phosphate. It carries out the reaction 1,2-dihexadecanoyl-sn-glycero-3-phospho-(1D-myo-inositol-3-phosphate) + H2O = 1,2-dihexadecanoyl-sn-glycero-3-phospho-(1D-myo-inositol) + phosphate. It catalyses the reaction 1,2-dioctanoyl-sn-glycero-3-phospho-(1-D-myo-inositol-3-phosphate) + H2O = 1,2-dioctanoyl-sn-glycero-3-phospho-(1D-myo-inositol) + phosphate. The enzyme catalyses 1,2-dihexadecanoyl-sn-glycero-3-phospho-(1D-myo-inositol-3,5-phosphate) + H2O = 1,2-dihexadecanoyl-sn-glycero-3-phospho-(1D-myo-inositol-5-phosphate) + phosphate. Lipid phosphatase that specifically dephosphorylates the D-3 position of phosphatidylinositol 3-phosphate and phosphatidylinositol 3,5-bisphosphate, generating phosphatidylinositol and phosphatidylinositol 5-phosphate. Decreases the levels of phosphatidylinositol 3-phosphate, a phospholipid found in cell membranes where it acts as key regulator of both cell signaling and intracellular membrane traffic. Could also have a molecular sequestering/adapter activity and regulate biological processes independently of its phosphatase activity. It includes the regulation of midbody abscission during mitotic cytokinesis. This Rattus norvegicus (Rat) protein is Phosphatidylinositol-3,5-bisphosphate 3-phosphatase MTMR3.